The sequence spans 112 residues: Protein FAM32A (112 aa).

The tract at residues 23-56 (TKRKKKKKDKDKAKMLEAMGTSKKNEEEKRRCLD) is disordered. Residues 45-56 (KKNEEEKRRCLD) are compositionally biased toward basic and acidic residues.

Belongs to the FAM32 family.

It localises to the nucleus. Its function is as follows. May induce G2 arrest and apoptosis. May also increase cell sensitivity to apoptotic stimuli. This is Protein FAM32A (Fam32a) from Rattus norvegicus (Rat).